Reading from the N-terminus, the 143-residue chain is Peptide methionine sulfoxide reductase B8 (143 aa).

In terms of domain architecture, MsrB spans 18–139 (DEEWRAVLSP…NSVSLKFASA (122 aa)). Residues cysteine 57, cysteine 60, cysteine 103, and cysteine 106 each contribute to the Zn(2+) site. The cysteines at positions 75 and 128 are disulfide-linked. Residue cysteine 128 is the Nucleophile of the active site.

This sequence belongs to the MsrB Met sulfoxide reductase family. Zn(2+) serves as cofactor.

It localises to the cytoplasm. It is found in the cytosol. It catalyses the reaction L-methionyl-[protein] + [thioredoxin]-disulfide + H2O = L-methionyl-(R)-S-oxide-[protein] + [thioredoxin]-dithiol. Functionally, catalyzes the reduction of methionine sulfoxide (MetSO) to methionine in proteins. Plays a protective role against oxidative stress by restoring activity to proteins that have been inactivated by methionine oxidation. MSRB family specifically reduces the MetSO R-enantiomer. The sequence is that of Peptide methionine sulfoxide reductase B8 (MSRB8) from Arabidopsis thaliana (Mouse-ear cress).